Here is a 150-residue protein sequence, read N- to C-terminus: MNKYEIVIMLDPAENIEKAQSLLKSTFKSGVEKFEKLEFTKLAYEINKSKVAQYVLAIVNSQGKEEINEFVRKANITKTFWRHMIINLTSEKGINKPAKPKKTFKKTFVARKFSRDDESKTHSTEEPRRANTKSTYKKSTSFSQDNKNKK.

Residues Lys-92–Lys-150 form a disordered region. Over residues Ala-98–Val-109 the composition is skewed to basic residues. The span at Phe-113–Arg-129 shows a compositional bias: basic and acidic residues. Positions Thr-132–Ser-141 are enriched in low complexity.

It belongs to the bacterial ribosomal protein bS6 family.

Functionally, binds together with bS18 to 16S ribosomal RNA. The chain is Small ribosomal subunit protein bS6 from Mycoplasmopsis pulmonis (strain UAB CTIP) (Mycoplasma pulmonis).